Here is a 457-residue protein sequence, read N- to C-terminus: uncharacterized protein (457 aa).

14 helical membrane passes run Y15–A35, I54–L74, G87–L107, V112–I132, I144–L164, I166–L186, L205–F225, Q229–I249, L269–V289, L308–I328, G334–L354, S357–F377, M400–L420, and T428–L448.

This sequence belongs to the major facilitator superfamily. TCR/Tet family.

It localises to the cell inner membrane. This is an uncharacterized protein from Escherichia coli (strain K12).